Here is a 288-residue protein sequence, read N- to C-terminus: Diaminopimelate epimerase (288 aa).

Substrate-binding residues include Asn17, Gln47, and Asn67. Cys76 functions as the Proton donor in the catalytic mechanism. Substrate contacts are provided by residues 77 to 78 (GN), Asn164, Asn197, and 215 to 216 (ER). Cys224 (proton acceptor) is an active-site residue. 225-226 (GS) contacts substrate.

Belongs to the diaminopimelate epimerase family. Homodimer.

Its subcellular location is the cytoplasm. It catalyses the reaction (2S,6S)-2,6-diaminopimelate = meso-2,6-diaminopimelate. It participates in amino-acid biosynthesis; L-lysine biosynthesis via DAP pathway; DL-2,6-diaminopimelate from LL-2,6-diaminopimelate: step 1/1. Its function is as follows. Catalyzes the stereoinversion of LL-2,6-diaminopimelate (L,L-DAP) to meso-diaminopimelate (meso-DAP), a precursor of L-lysine and an essential component of the bacterial peptidoglycan. The sequence is that of Diaminopimelate epimerase from Rhodopseudomonas palustris (strain BisA53).